The primary structure comprises 235 residues: Probable transcriptional regulatory protein MPN_478 (235 aa).

Belongs to the TACO1 family.

Its subcellular location is the cytoplasm. The polypeptide is Probable transcriptional regulatory protein MPN_478 (Mycoplasma pneumoniae (strain ATCC 29342 / M129 / Subtype 1) (Mycoplasmoides pneumoniae)).